The sequence spans 256 residues: 2-C-methyl-D-erythritol 4-phosphate cytidylyltransferase (256 aa).

This sequence belongs to the IspD/TarI cytidylyltransferase family. IspD subfamily.

It carries out the reaction 2-C-methyl-D-erythritol 4-phosphate + CTP + H(+) = 4-CDP-2-C-methyl-D-erythritol + diphosphate. The protein operates within isoprenoid biosynthesis; isopentenyl diphosphate biosynthesis via DXP pathway; isopentenyl diphosphate from 1-deoxy-D-xylulose 5-phosphate: step 2/6. Functionally, catalyzes the formation of 4-diphosphocytidyl-2-C-methyl-D-erythritol from CTP and 2-C-methyl-D-erythritol 4-phosphate (MEP). The protein is 2-C-methyl-D-erythritol 4-phosphate cytidylyltransferase of Corynebacterium glutamicum (strain R).